A 398-amino-acid chain; its full sequence is Dual-specificity RNA methyltransferase RlmN (398 aa).

Catalysis depends on glutamate 121, which acts as the Proton acceptor. The 244-residue stretch at 127 to 370 (ETDRGTLCVS…VRTPRGRDIL (244 aa)) folds into the Radical SAM core domain. The cysteines at positions 134 and 373 are disulfide-linked. Residues cysteine 141, cysteine 145, and cysteine 148 each coordinate [4Fe-4S] cluster. S-adenosyl-L-methionine-binding positions include 199–200 (GE), serine 231, 253–255 (SLH), and asparagine 330. The S-methylcysteine intermediate role is filled by cysteine 373.

Belongs to the radical SAM superfamily. RlmN family. [4Fe-4S] cluster serves as cofactor.

The protein resides in the cytoplasm. It carries out the reaction adenosine(2503) in 23S rRNA + 2 reduced [2Fe-2S]-[ferredoxin] + 2 S-adenosyl-L-methionine = 2-methyladenosine(2503) in 23S rRNA + 5'-deoxyadenosine + L-methionine + 2 oxidized [2Fe-2S]-[ferredoxin] + S-adenosyl-L-homocysteine. The enzyme catalyses adenosine(37) in tRNA + 2 reduced [2Fe-2S]-[ferredoxin] + 2 S-adenosyl-L-methionine = 2-methyladenosine(37) in tRNA + 5'-deoxyadenosine + L-methionine + 2 oxidized [2Fe-2S]-[ferredoxin] + S-adenosyl-L-homocysteine. Specifically methylates position 2 of adenine 2503 in 23S rRNA and position 2 of adenine 37 in tRNAs. m2A2503 modification seems to play a crucial role in the proofreading step occurring at the peptidyl transferase center and thus would serve to optimize ribosomal fidelity. The protein is Dual-specificity RNA methyltransferase RlmN of Rhodopseudomonas palustris (strain BisB5).